We begin with the raw amino-acid sequence, 230 residues long: MTQDELKRLVGQAAADYVIQNVPEGAVIGVGTGSTANCFIDALAAVKARYRGAVSSSLATTERLKSHGIKVFDLNEIESLQVYVDGADEIDASGAMIKGGGGALTREKIVASVADTFVCIADASKRVPVLGAFPLPIEVVPMARTAIGRRVTALGGVPVLRVTKDGAPYITDNGNEIIDVKGLQIADPRGFEAQVNAWPGVVTVGLFAERGANLCLLGTPNGVETIVYPA.

Substrate is bound by residues 32–35, 85–88, and 98–101; these read TGST, DGAD, and KGGG. The Proton acceptor role is filled by E107. Residue K125 coordinates substrate.

The protein belongs to the ribose 5-phosphate isomerase family. In terms of assembly, homodimer.

It carries out the reaction aldehydo-D-ribose 5-phosphate = D-ribulose 5-phosphate. It functions in the pathway carbohydrate degradation; pentose phosphate pathway; D-ribose 5-phosphate from D-ribulose 5-phosphate (non-oxidative stage): step 1/1. Its function is as follows. Catalyzes the reversible conversion of ribose-5-phosphate to ribulose 5-phosphate. The sequence is that of Ribose-5-phosphate isomerase A from Burkholderia ambifaria (strain ATCC BAA-244 / DSM 16087 / CCUG 44356 / LMG 19182 / AMMD) (Burkholderia cepacia (strain AMMD)).